The sequence spans 502 residues: Bone morphogenetic protein receptor type-1B (502 aa).

The N-terminal stretch at 1 to 13 (MLLRSSGKLNVGT) is a signal peptide. Residues 1 to 24 (MLLRSSGKLNVGTKKEDGESTAPT) form a disordered region. Topologically, residues 14–126 (KKEDGESTAP…DFVDGPIHHK (113 aa)) are extracellular. 5 cysteine pairs are disulfide-bonded: cysteine 32–cysteine 53, cysteine 34–cysteine 38, cysteine 47–cysteine 71, cysteine 81–cysteine 95, and cysteine 96–cysteine 102. The helical transmembrane segment at 127–148 (ALLISVTVCSLLLVLIILFCYF) threads the bilayer. At 149–502 (RYKRQEARPR…KMSESQDIKL (354 aa)) the chain is on the cytoplasmic side. One can recognise a GS domain in the interval 174-203 (ESLRDLIEQSQSSGSGSGLPLLVQRTIAKQ). The region spanning 204–494 (IQMVKQIGKG…LRVKKTLAKM (291 aa)) is the Protein kinase domain. Residues 210-218 (IGKGRYGEV) and lysine 231 each bind ATP. The active-site Proton acceptor is aspartate 332.

The protein belongs to the protein kinase superfamily. TKL Ser/Thr protein kinase family. TGFB receptor subfamily. As to quaternary structure, interacts with high affinity with GDF5; positively regulates chondrocyte differentiation. Interacts with SCUBE3. Interacts with TSC22D1/TSC-22. Interacts with TGFBR3. It depends on Mg(2+) as a cofactor. Mn(2+) is required as a cofactor. In terms of processing, autophosphorylated.

Its subcellular location is the cell membrane. It catalyses the reaction L-threonyl-[receptor-protein] + ATP = O-phospho-L-threonyl-[receptor-protein] + ADP + H(+). It carries out the reaction L-seryl-[receptor-protein] + ATP = O-phospho-L-seryl-[receptor-protein] + ADP + H(+). In terms of biological role, on ligand binding, forms a receptor complex consisting of two type II and two type I transmembrane serine/threonine kinases. Type II receptors phosphorylate and activate type I receptors which autophosphorylate, then bind and activate SMAD transcriptional regulators. Receptor for BMP7/OP-1. Receptor for GDF5. Positively regulates chondrocyte differentiation through GDF5 interaction. The sequence is that of Bone morphogenetic protein receptor type-1B (Bmpr1b) from Mus musculus (Mouse).